The chain runs to 252 residues: MQIESDNQVTNQSYSFFRQENTILDDKKFMEILQKWGLQHSIKVSTFLFDIKFDHLNPNQFLLDLFNSKDVRGSLHYVSFKQNVLLSQIKFQPLTCKSIKLDLFDKLTEDKIVVKGHIKQCFEEQFENIQIADELRKALVLEDSEQYCVFNEADRQELLFKLFQILVLGGQLCQYEDEIQAYLDWTKYLYKNTVNARKYADKDEIYIDSYAYDIRKLENSYSSDHPQNVMYVVVNPSLRIVNIIENQWLKVW.

The protein belongs to the CFAP300 family.

Its subcellular location is the cytoplasm. The protein localises to the cytoskeleton. It is found in the cilium axoneme. In terms of biological role, cilium- and flagellum-specific protein that plays a role in axonemal structure organization and motility. Plays a role in outer and inner axonemal dynein arm assembly. This chain is Cilia- and flagella-associated protein 300, found in Paramecium tetraurelia.